A 222-amino-acid chain; its full sequence is Recombination protein RecR (222 aa).

The C4-type zinc-finger motif lies at 57-72 (CPVCFNITDAERCDVC). A Toprim domain is found at 80-173 (SVICVVEEPG…VVSRIAYGLP (94 aa)). The tract at residues 189–222 (ALSGRRRVSEPASPPPPRRNDEEQDGAPARPPSH) is disordered.

Belongs to the RecR family.

Functionally, may play a role in DNA repair. It seems to be involved in an RecBC-independent recombinational process of DNA repair. It may act with RecF and RecO. The protein is Recombination protein RecR of Deinococcus geothermalis (strain DSM 11300 / CIP 105573 / AG-3a).